The sequence spans 369 residues: Methylthioribose-1-phosphate isomerase (369 aa).

Residue Met1 is modified to N-acetylmethionine. Omega-N-methylarginine is present on Arg158. Asp248 (proton donor) is an active-site residue. At Ser366 the chain carries Phosphoserine.

It belongs to the eIF-2B alpha/beta/delta subunits family. MtnA subfamily.

The protein resides in the cytoplasm. The protein localises to the nucleus. It carries out the reaction 5-(methylsulfanyl)-alpha-D-ribose 1-phosphate = 5-(methylsulfanyl)-D-ribulose 1-phosphate. The protein operates within amino-acid biosynthesis; L-methionine biosynthesis via salvage pathway; L-methionine from S-methyl-5-thio-alpha-D-ribose 1-phosphate: step 1/6. In terms of biological role, catalyzes the interconversion of methylthioribose-1-phosphate (MTR-1-P) into methylthioribulose-1-phosphate (MTRu-1-P). The protein is Methylthioribose-1-phosphate isomerase (Mri1) of Mus musculus (Mouse).